Consider the following 206-residue polypeptide: Ras-related protein Rab-18 (206 aa).

Methionine 1 bears the N-acetylmethionine mark. Residues serine 17, glycine 20, lysine 21, serine 22, serine 23, aspartate 34, proline 35, threonine 40, glycine 66, lysine 123, and aspartate 125 each coordinate GTP. Serine 22 provides a ligand contact to Mg(2+). 2 consecutive short sequence motifs (switch) follow at residues 31 to 45 (DTFDPELAATIGVDF) and 63 to 80 (DTAGQERFRTLTPSYYRG). Threonine 40 contacts Mg(2+). Serine 144 is subject to Phosphoserine. Alanine 152 is a binding site for GTP. Cysteine 199 carries S-palmitoyl cysteine lipidation. Residue cysteine 203 is modified to Cysteine methyl ester. Cysteine 203 is lipidated: S-geranylgeranyl cysteine. Positions 204–206 (SVL) are cleaved as a propeptide — removed in mature form.

This sequence belongs to the small GTPase superfamily. Rab family. Interacts (in GTP-bound form) with ZFYVE1. Interacts with ZW10 and this interaction is enhanced in the presence of ZFYVE1. Interacts with BSCL2. Requires Mg(2+) as cofactor.

The protein localises to the endoplasmic reticulum membrane. It is found in the golgi apparatus. The protein resides in the cis-Golgi network membrane. Its subcellular location is the lipid droplet. It localises to the apical cell membrane. The enzyme catalyses GTP + H2O = GDP + phosphate + H(+). With respect to regulation, regulated by guanine nucleotide exchange factors (GEFs) which promote the exchange of bound GDP for free GTP. Regulated by GTPase activating proteins (GAPs) which increase the GTP hydrolysis activity at the ER membrane. Inhibited by GDP dissociation inhibitors (GDIs) which prevent Rab-GDP dissociation. Its function is as follows. The small GTPases Rab are key regulators of intracellular membrane trafficking, from the formation of transport vesicles to their fusion with membranes. Rabs cycle between an inactive GDP-bound form and an active GTP-bound form that is able to recruit to membranes different sets of downstream effectors directly responsible for vesicle formation, movement, tethering and fusion. RAB18 is required for the localization of ZFYVE1 to lipid droplets and for its function in mediating the formation of endoplasmic reticulum-lipid droplets (ER-LD) contacts. Also required for maintaining endoplasmic reticulum structure. Plays a role in apical endocytosis/recycling. Plays a key role in eye and brain development and neurodegeneration. The chain is Ras-related protein Rab-18 from Rattus norvegicus (Rat).